Here is a 325-residue protein sequence, read N- to C-terminus: Melanocortin receptor 5 (325 aa).

At 1–37 (MNSSSHLTLLDLTLNASEDNILGQNVNNKSSACEDMG) the chain is on the extracellular side. 3 N-linked (GlcNAc...) asparagine glycosylation sites follow: N2, N15, and N28. The chain crosses the membrane as a helical span at residues 38-61 (IAVEVFLTLGLVSLLENILVIGAI). The Cytoplasmic segment spans residues 62–73 (VKNKNLHSPMYF). Residues 74-97 (FVGSLAVADMLVSMSNAWETITIY) form a helical membrane-spanning segment. Residues 98-114 (LINNKHVVIADTFVRHI) lie on the Extracellular side of the membrane. Residues 115–138 (DNVFDSMICISVVASMCSLLAIAV) traverse the membrane as a helical segment. Residues 139–155 (DRYITIFYALRYHHIMT) are Cytoplasmic-facing. A helical membrane pass occupies residues 156-179 (ARRSGVIIACIWTFCISCGIVFII). The Extracellular segment spans residues 180-186 (YYESKYV). A helical transmembrane segment spans residues 187–211 (IVCLISMFFTMLFFMVSLYIHMFLL). Over 212-239 (ARNHVKRIAASPRYNSVRQRASMKGAIT) the chain is Cytoplasmic. The helical transmembrane segment at 240–265 (LTMLLGIFIVCWSPFFLHLILMISCP) threads the bilayer. At 266–273 (QNVYCACF) the chain is on the extracellular side. Residues 274–297 (MSYFNMYLILIMCNSVIDPLIYAL) form a helical membrane-spanning segment. Topologically, residues 298 to 325 (RSQEMRRTFKEIICCHGFRRTCTLLGRY) are cytoplasmic. S-palmitoyl cysteine attachment occurs at residues C311 and C312.

This sequence belongs to the G-protein coupled receptor 1 family. As to expression, very low expression levels is detected in brain, while high levels are found in adrenals, stomach, lung and spleen.

It is found in the cell membrane. Its function is as follows. Receptor for MSH (alpha, beta and gamma) and ACTH. The activity of this receptor is mediated by G proteins which activate adenylate cyclase. This receptor is a possible mediator of the immunomodulation properties of melanocortins. This is Melanocortin receptor 5 (Mc5r) from Rattus norvegicus (Rat).